Consider the following 547-residue polypeptide: Rho GTPase-activating protein 36 (547 aa).

Residues 1–40 form the signal peptide; sequence MGGCIPFLKAARALCPRIMPPLLLLSAFIFLVSVLGGAPG. Positions 226–426 constitute a Rho-GAP domain; sequence MSLNPIAKQI…AMIDNWDVLF (201 aa). The interval 485–547 is disordered; sequence AVLAQSKPSD…AKTGVSYFFP (63 aa). Residues 524 to 539 are compositionally biased toward basic and acidic residues; the sequence is EQDRPLLRVPREKEAK.

As to quaternary structure, may interacts (via the Rho-GAP domain) with the active form of RAC1. Detected in the outer root sheath of hair follicles at the level of the stem cell bulge, during the anagen and telogen phases of hair growth (at protein level).

In terms of biological role, GTPase activator for the Rho-type GTPases by converting them to an inactive GDP-bound state. This Homo sapiens (Human) protein is Rho GTPase-activating protein 36 (ARHGAP36).